Here is a 109-residue protein sequence, read N- to C-terminus: RNA-binding protein Hfq (109 aa).

The region spanning aspartate 9–valine 68 is the Sm domain. Residues proline 77–glutamate 109 are disordered.

This sequence belongs to the Hfq family. In terms of assembly, homohexamer.

RNA chaperone that binds small regulatory RNA (sRNAs) and mRNAs to facilitate mRNA translational regulation in response to envelope stress, environmental stress and changes in metabolite concentrations. Also binds with high specificity to tRNAs. This Francisella tularensis subsp. mediasiatica (strain FSC147) protein is RNA-binding protein Hfq.